Reading from the N-terminus, the 536-residue chain is Pre-mRNA-splicing factor SLU7 (536 aa).

The interval 22-42 is disordered; that stretch reads EARKAGLAPAEVDEDGKEINP. The segment at 94–111 adopts a CCHC-type zinc-finger fold; that stretch reads GACENCGAMTHDKKSCME. The disordered stretch occupies residues 178 to 201; the sequence is KLEEKDGEEGDENVASEEEDEEDG. The span at 182-200 shows a compositional bias: acidic residues; the sequence is KDGEEGDENVASEEEDEED.

It belongs to the SLU7 family.

It is found in the nucleus. In terms of biological role, participates in the second catalytic step of pre-mRNA splicing, when the free hydroxyl group of exon I attacks the 3'-splice site to generate spliced mRNA and the excised lariat intron. In Oryza sativa subsp. indica (Rice), this protein is Pre-mRNA-splicing factor SLU7.